Here is a 317-residue protein sequence, read N- to C-terminus: Malate dehydrogenase (317 aa).

NAD(+)-binding positions include 10–15 and Asp-34; that span reads GGGQIG. Residues Arg-83 and Arg-89 each coordinate substrate. Residues Asn-96 and 119-121 contribute to the NAD(+) site; that span reads ISN. Substrate-binding residues include Asn-121 and Arg-152. His-176 (proton acceptor) is an active-site residue.

The protein belongs to the LDH/MDH superfamily. MDH type 3 family.

It carries out the reaction (S)-malate + NAD(+) = oxaloacetate + NADH + H(+). Its function is as follows. Catalyzes the reversible oxidation of malate to oxaloacetate. The protein is Malate dehydrogenase of Citrifermentans bemidjiense (strain ATCC BAA-1014 / DSM 16622 / JCM 12645 / Bem) (Geobacter bemidjiensis).